The chain runs to 190 residues: dCTP deaminase (190 aa).

Lys-107–Arg-112 contacts dCTP. Catalysis depends on Glu-133, which acts as the Proton donor/acceptor. DCTP is bound by residues Gln-152, Tyr-166, and Gln-176.

This sequence belongs to the dCTP deaminase family. As to quaternary structure, homotrimer.

The enzyme catalyses dCTP + H2O + H(+) = dUTP + NH4(+). It functions in the pathway pyrimidine metabolism; dUMP biosynthesis; dUMP from dCTP (dUTP route): step 1/2. In terms of biological role, catalyzes the deamination of dCTP to dUTP. The sequence is that of dCTP deaminase from Campylobacter hominis (strain ATCC BAA-381 / DSM 21671 / CCUG 45161 / LMG 19568 / NCTC 13146 / CH001A).